A 646-amino-acid polypeptide reads, in one-letter code: Threonine--tRNA ligase (646 aa).

In terms of domain architecture, TGS spans 1–63 (MAQISLTFPD…EADAKIAIHT (63 aa)). Residues 247-544 (DHRKLGKEME…LIENYAGKLP (298 aa)) form a catalytic region. Zn(2+) contacts are provided by cysteine 344, histidine 395, and histidine 521.

The protein belongs to the class-II aminoacyl-tRNA synthetase family. In terms of assembly, homodimer. It depends on Zn(2+) as a cofactor.

The protein resides in the cytoplasm. It carries out the reaction tRNA(Thr) + L-threonine + ATP = L-threonyl-tRNA(Thr) + AMP + diphosphate + H(+). Its function is as follows. Catalyzes the attachment of threonine to tRNA(Thr) in a two-step reaction: L-threonine is first activated by ATP to form Thr-AMP and then transferred to the acceptor end of tRNA(Thr). Also edits incorrectly charged L-seryl-tRNA(Thr). The sequence is that of Threonine--tRNA ligase from Cereibacter sphaeroides (strain ATCC 17025 / ATH 2.4.3) (Rhodobacter sphaeroides).